The following is an 844-amino-acid chain: MQDISNHTPMIQQYLKIKSQYQDILLFYRMGDFYELFFDDAKKAAELLDITLTARGKSNGESIPMAGVPYHAAEAYIAKIVKKGLSIAICEQTGDPNTSKGPVERQVTRIITPATVSEEAFLDNNQDSILVSIFEKNNKYYLAYTSYTQGKIYLVKTLTSLNELKNTVLKLSPQEIITNSHELAQQNPFKKPIKALEEWYYSNFEAKKYINDSLDTNIANNILNLYKNDQLTTIGSILSYLTNILKDTPRHITDISYEQEQDTLNIDINSRINLELDNNSKSSLLSIIGKCKTSLGSRLLKRYFSNPTRNLNILATRHSIINSLGENQHFLKIQDVLSYISDIERIISRVALGTVKPKDLVALRDSLEQLPILKKLLSEKNTPEITNINNRIHQLDELVTLLDKAIIENPPTTIRDGGVIKEGFDKELDELKSIKDNSYDFLIKFEELQKQKTGISTLKVGYNRVHGYYIELSKQHADKIPTEYVRRQTLKASERYITEELKNFEDKVLSSKEKALAREKLIYDTLLKKVIEYYKQIQETAASIAEIDVLANFAERAIKLKLSQPKFNNLAKLELKEVRHLAIEHNIDEPFIPNDTLLSKDTNTLQIITGPNMGGKSTYMRQVAQLIFLAYIGSFVPASYADICDIDTIYTRIGASDDISSGRSTFMVEMTETAYILNNASAKSLVIMDEIGRGTSTFDGLALAKACAEKFAQIGAFTLFATHYFELTELAKQYPNVCNIHFEAKEYKDNIYFMHKAVTGAAKKSYGIQVAKLAGISQDVLESAKQNLYNLEKKQQLTESTQVQAQFQLEPTTQNPLQQKLDAIDINTITPLEALNILFELKKR.

Residue Gly-610–Ser-617 coordinates ATP.

The protein belongs to the DNA mismatch repair MutS family.

Functionally, this protein is involved in the repair of mismatches in DNA. It is possible that it carries out the mismatch recognition step. This protein has a weak ATPase activity. The polypeptide is DNA mismatch repair protein MutS (Francisella tularensis subsp. tularensis (strain WY96-3418)).